A 469-amino-acid chain; its full sequence is UDP-glycosyltransferase 75B1 (469 aa).

Catalysis depends on His-16, which acts as the Proton acceptor. His-16 provides a ligand contact to an anthocyanidin. 7 residues coordinate UDP-alpha-D-glucose: Gln-334, His-349, Trp-352, Ser-354, Glu-357, Asp-373, and Gln-374.

Belongs to the UDP-glycosyltransferase family. Interacts with CALS1, ROP1 and phragmoplastin.

It is found in the cytoplasm. Its subcellular location is the perinuclear region. The protein localises to the cytoskeleton. It localises to the phragmoplast. It carries out the reaction (indol-3-yl)acetate + UDP-alpha-D-glucose = 1-O-(indol-3-ylacetyl)-beta-D-glucose + UDP. It participates in plant hormone metabolism; auxin conjugation. In terms of biological role, possesses low catalytic activity on indole-3-acetic acid (IAA) in vitro. May transfer UDP-glucose from sucrose synthase to callose synthase for the synthesis of callose at the forming cell plate during cytokinesis. Has high affinity for 4-aminobenzoate. Catalyzes the formation of 4-aminobenzoate glucose ester which represents a storage form of 4-aminobenzoate in the vacuole. Is the major source of this activity in the plant. Also active in vitro on benzoates and benzoate derivatives. The sequence is that of UDP-glycosyltransferase 75B1 (UGT75B1) from Arabidopsis thaliana (Mouse-ear cress).